The chain runs to 366 residues: Chorismate synthase (366 aa).

Residues Arg48 and Arg54 each contribute to the NADP(+) site. FMN contacts are provided by residues 125–127, 238–239, Gly278, 293–297, and Arg319; these read RSS, NA, and KPTSS.

It belongs to the chorismate synthase family. In terms of assembly, homotetramer. It depends on FMNH2 as a cofactor.

The catalysed reaction is 5-O-(1-carboxyvinyl)-3-phosphoshikimate = chorismate + phosphate. It functions in the pathway metabolic intermediate biosynthesis; chorismate biosynthesis; chorismate from D-erythrose 4-phosphate and phosphoenolpyruvate: step 7/7. Functionally, catalyzes the anti-1,4-elimination of the C-3 phosphate and the C-6 proR hydrogen from 5-enolpyruvylshikimate-3-phosphate (EPSP) to yield chorismate, which is the branch point compound that serves as the starting substrate for the three terminal pathways of aromatic amino acid biosynthesis. This reaction introduces a second double bond into the aromatic ring system. In Burkholderia ambifaria (strain MC40-6), this protein is Chorismate synthase.